We begin with the raw amino-acid sequence, 872 residues long: Alanine--tRNA ligase (872 aa).

Positions 567, 571, 669, and 673 each coordinate Zn(2+).

It belongs to the class-II aminoacyl-tRNA synthetase family. Zn(2+) serves as cofactor.

The protein resides in the cytoplasm. It carries out the reaction tRNA(Ala) + L-alanine + ATP = L-alanyl-tRNA(Ala) + AMP + diphosphate. Its function is as follows. Catalyzes the attachment of alanine to tRNA(Ala) in a two-step reaction: alanine is first activated by ATP to form Ala-AMP and then transferred to the acceptor end of tRNA(Ala). Also edits incorrectly charged Ser-tRNA(Ala) and Gly-tRNA(Ala) via its editing domain. The chain is Alanine--tRNA ligase from Streptococcus pyogenes serotype M2 (strain MGAS10270).